A 342-amino-acid chain; its full sequence is Polygalacturonase inhibitor 1 (342 aa).

The signal sequence occupies residues Met-1–Ser-29. 2 disulfide bridges follow: Cys-32-Cys-62 and Cys-63-Cys-72. Residue Asn-64 is glycosylated (N-linked (GlcNAc...) asparagine). LRR repeat units follow at residues Asn-82–Leu-107, Asn-108–Leu-132, His-133–Leu-156, Val-157–Leu-180, Gly-181–Phe-205, Thr-206–Leu-228, Ala-229–Thr-252, Lys-253–Leu-275, Asn-276–Leu-299, and Gln-300–Leu-319. Asn-141 is a glycosylation site (N-linked (GlcNAc...) asparagine). Residue Asn-303 is glycosylated (N-linked (GlcNAc...) asparagine). 2 cysteine pairs are disulfide-bonded: Cys-310–Cys-332 and Cys-334–Cys-341.

The protein belongs to the polygalacturonase-inhibiting protein family.

It localises to the secreted. The protein resides in the cell wall. It is found in the membrane. In terms of biological role, inhibitor of fungal polygalacturonase. It is an important factor for plant resistance to phytopathogenic fungi. Substrate preference is polygalacturonase (PG) from A.niger &gt;&gt; PG of F.oxysporum, A.solani or B.cinerea. Not active on PG from F.moniliforme. The sequence is that of Polygalacturonase inhibitor 1 (PGIP1) from Phaseolus vulgaris (Kidney bean).